A 240-amino-acid polypeptide reads, in one-letter code: tRNA (guanine-N(1)-)-methyltransferase (240 aa).

Residues Gly111 and 130–135 each bind S-adenosyl-L-methionine; that span reads IGDYVI.

It belongs to the RNA methyltransferase TrmD family. Homodimer.

The protein localises to the cytoplasm. It catalyses the reaction guanosine(37) in tRNA + S-adenosyl-L-methionine = N(1)-methylguanosine(37) in tRNA + S-adenosyl-L-homocysteine + H(+). Specifically methylates guanosine-37 in various tRNAs. In Mycoplasma capricolum subsp. capricolum (strain California kid / ATCC 27343 / NCTC 10154), this protein is tRNA (guanine-N(1)-)-methyltransferase.